We begin with the raw amino-acid sequence, 681 residues long: Pentatricopeptide repeat-containing protein At2g22410, mitochondrial (681 aa).

The N-terminal 32 residues, 1–32 (MNISKAKLLLLPPPLTPKLNRSLYSHSQRRTR), are a transit peptide targeting the mitochondrion. PPR repeat units lie at residues 117-151 (NIFSWNVTIRGFSESENPKESFLLYKQMLRHGCCE), 155-189 (DHFTYPVLFKVCADLRLSSLGHMILGHVLKLRLEL), 190-220 (VSHVHNASIHMFASCGDMENARKVFDESPVR), 221-255 (DLVSWNCLINGYKKIGEAEKAIYVYKLMESEGVKP), 256-290 (DDVTMIGLVSSCSMLGDLNRGKEFYEYVKENGLRM), 291-321 (TIPLVNALMDMFSKCGDIHEARRIFDNLEKR), 322-356 (TIVSWTTMISGYARCGLLDVSRKLFDDMEEKDVVL), 357-387 (WNAMIGGSVQAKRGQDALALFQEMQTSNTKP), 388-422 (DEITMIHCLSACSQLGALDVGIWIHRYIEKYSLSL), 423-453 (NVALGTSLVDMYAKCGNISEALSVFHGIQTR), 454-488 (NSLTYTAIIGGLALHGDASTAISYFNEMIDAGIAP), 489-519 (DEITFIGLLSACCHGGMIQTGRDYFSQMKSR), and 525-555 (QLKHYSIMVDLLGRAGLLEEADRLMESMPME). The type E motif stretch occupies residues 560 to 635 (VWGALLFGCR…IPGCSSIEVN (76 aa)). Positions 636–666 (GIVCEFIVRDKSRPESEKIYDRLHCLGRHMR) are type E(+) motif.

The protein belongs to the PPR family. PCMP-E subfamily.

The protein resides in the mitochondrion. The polypeptide is Pentatricopeptide repeat-containing protein At2g22410, mitochondrial (PCMP-E28) (Arabidopsis thaliana (Mouse-ear cress)).